Reading from the N-terminus, the 69-residue chain is NADH dehydrogenase [ubiquinone] 1 beta subcomplex subunit 2 (69 aa).

It belongs to the complex I NDUFB2 subunit family. As to quaternary structure, complex I is composed of at least 49 different subunits.

The protein resides in the mitochondrion inner membrane. Accessory subunit of the mitochondrial membrane respiratory chain NADH dehydrogenase (Complex I), that is believed not to be involved in catalysis. Complex I functions in the transfer of electrons from NADH to the respiratory chain. The immediate electron acceptor for the enzyme is believed to be ubiquinone. This Arabidopsis thaliana (Mouse-ear cress) protein is NADH dehydrogenase [ubiquinone] 1 beta subcomplex subunit 2.